A 361-amino-acid chain; its full sequence is Nuclear pore complex protein NUP43 (361 aa).

The interval 51 to 73 (IQSLDPNPRGNHNTNPLIESLSS) is disordered. WD repeat units lie at residues 132–173 (FHVG…YRKV), 177–215 (NGLVAYRAVKWASPTEFVTGGYGFGLQLWDQRKSGEAVS), and 225–265 (KTSA…QPIV).

As to quaternary structure, part of the nuclear pore complex (NPC). The NPC has an eight-fold symmetrical structure comprising a central transport channel and two rings, the cytoplasmic and nuclear rings, to which eight filaments are attached. The cytoplasmic filaments have loose ends, while the nuclear filaments are joined in a distal ring, forming a nuclear basket. NPCs are highly dynamic in configuration and composition, and can be devided in 3 subcomplexes, the NUP62 subcomplex, the NUP107-160 subcomplex and the NUP93 subcomplex, containing approximately 30 different nucleoporin proteins.

It localises to the nucleus envelope. Its subcellular location is the nucleus. The protein resides in the nuclear pore complex. The sequence is that of Nuclear pore complex protein NUP43 from Arabidopsis thaliana (Mouse-ear cress).